The following is a 444-amino-acid chain: ATP-dependent protease ATPase subunit HslU (444 aa).

Residues isoleucine 20 and 62-67 (GVGKTE) contribute to the ATP site. The disordered stretch occupies residues 130–158 (EDRILDALVPPPRGASGEPERGEDNSARQ). ATP-binding residues include aspartate 257, glutamate 322, and arginine 394.

The protein belongs to the ClpX chaperone family. HslU subfamily. A double ring-shaped homohexamer of HslV is capped on each side by a ring-shaped HslU homohexamer. The assembly of the HslU/HslV complex is dependent on binding of ATP.

It is found in the cytoplasm. Its function is as follows. ATPase subunit of a proteasome-like degradation complex; this subunit has chaperone activity. The binding of ATP and its subsequent hydrolysis by HslU are essential for unfolding of protein substrates subsequently hydrolyzed by HslV. HslU recognizes the N-terminal part of its protein substrates and unfolds these before they are guided to HslV for hydrolysis. In Bordetella bronchiseptica (strain ATCC BAA-588 / NCTC 13252 / RB50) (Alcaligenes bronchisepticus), this protein is ATP-dependent protease ATPase subunit HslU.